Consider the following 158-residue polypeptide: 6,7-dimethyl-8-ribityllumazine synthase (158 aa).

5-amino-6-(D-ribitylamino)uracil contacts are provided by residues phenylalanine 22, 57 to 59 (AVE), and 81 to 83 (AVI). (2S)-2-hydroxy-3-oxobutyl phosphate is bound at residue 86–87 (GT). Histidine 89 serves as the catalytic Proton donor. Phenylalanine 114 serves as a coordination point for 5-amino-6-(D-ribitylamino)uracil. Arginine 128 contacts (2S)-2-hydroxy-3-oxobutyl phosphate.

Belongs to the DMRL synthase family. Forms an icosahedral capsid composed of 60 subunits, arranged as a dodecamer of pentamers.

The catalysed reaction is (2S)-2-hydroxy-3-oxobutyl phosphate + 5-amino-6-(D-ribitylamino)uracil = 6,7-dimethyl-8-(1-D-ribityl)lumazine + phosphate + 2 H2O + H(+). Its pathway is cofactor biosynthesis; riboflavin biosynthesis; riboflavin from 2-hydroxy-3-oxobutyl phosphate and 5-amino-6-(D-ribitylamino)uracil: step 1/2. Its function is as follows. Catalyzes the formation of 6,7-dimethyl-8-ribityllumazine by condensation of 5-amino-6-(D-ribitylamino)uracil with 3,4-dihydroxy-2-butanone 4-phosphate. This is the penultimate step in the biosynthesis of riboflavin. This Shewanella halifaxensis (strain HAW-EB4) protein is 6,7-dimethyl-8-ribityllumazine synthase.